The sequence spans 296 residues: Fructose-bisphosphate aldolase class 1 (296 aa).

Glutamate 175 serves as the catalytic Proton acceptor. The active-site Schiff-base intermediate with dihydroxyacetone-P is the lysine 212.

It belongs to the class I fructose-bisphosphate aldolase family.

The catalysed reaction is beta-D-fructose 1,6-bisphosphate = D-glyceraldehyde 3-phosphate + dihydroxyacetone phosphate. It participates in carbohydrate degradation; glycolysis; D-glyceraldehyde 3-phosphate and glycerone phosphate from D-glucose: step 4/4. In Staphylococcus aureus (strain bovine RF122 / ET3-1), this protein is Fructose-bisphosphate aldolase class 1.